We begin with the raw amino-acid sequence, 106 residues long: Urease subunit beta (106 aa).

The protein belongs to the urease beta subunit family. As to quaternary structure, heterotrimer of UreA (gamma), UreB (beta) and UreC (alpha) subunits. Three heterotrimers associate to form the active enzyme.

It localises to the cytoplasm. It catalyses the reaction urea + 2 H2O + H(+) = hydrogencarbonate + 2 NH4(+). The protein operates within nitrogen metabolism; urea degradation; CO(2) and NH(3) from urea (urease route): step 1/1. The polypeptide is Urease subunit beta (Prochlorococcus marinus (strain AS9601)).